A 242-amino-acid polypeptide reads, in one-letter code: Ubiquinone biosynthesis O-methyltransferase (242 aa).

S-adenosyl-L-methionine is bound by residues Arg-44, Gly-64, Asp-85, and Met-129.

The protein belongs to the methyltransferase superfamily. UbiG/COQ3 family.

It catalyses the reaction a 3-demethylubiquinol + S-adenosyl-L-methionine = a ubiquinol + S-adenosyl-L-homocysteine + H(+). The catalysed reaction is a 3-(all-trans-polyprenyl)benzene-1,2-diol + S-adenosyl-L-methionine = a 2-methoxy-6-(all-trans-polyprenyl)phenol + S-adenosyl-L-homocysteine + H(+). It functions in the pathway cofactor biosynthesis; ubiquinone biosynthesis. In terms of biological role, O-methyltransferase that catalyzes the 2 O-methylation steps in the ubiquinone biosynthetic pathway. The polypeptide is Ubiquinone biosynthesis O-methyltransferase (Yersinia pseudotuberculosis serotype O:1b (strain IP 31758)).